A 319-amino-acid polypeptide reads, in one-letter code: Olfactory receptor 56B4 (319 aa).

Topologically, residues 1-31 (MDTSTSVTYDSSLQISQFILMGLPGIHEWQH) are extracellular. A helical transmembrane segment spans residues 32–52 (WLSLPLTLLYLLALGANLLII). The Cytoplasmic segment spans residues 53–60 (ITIQHETV). A helical membrane pass occupies residues 61 to 81 (LHEPMYHLLGILAVVDIGLAT). Topologically, residues 82 to 105 (TIMPKILAIFWFDAKAISLPMCFA) are extracellular. Residues Cys-103 and Cys-195 are joined by a disulfide bond. The chain crosses the membrane as a helical span at residues 106-126 (QIYAIHCFFCIESGIFLCMAV). Residues 127–145 (DRYIAICRPLQYPSIVTKA) are Cytoplasmic-facing. A helical membrane pass occupies residues 146–166 (FVFKATGFIMLRNGLLTIPVP). Over 167–202 (ILAAQRHYCSRNEIEHCLCSNLGVISLACDDITVNK) the chain is Extracellular. Residues 203-223 (FYQLMLAWVLVGSDMALVFSS) form a helical membrane-spanning segment. The Cytoplasmic portion of the chain corresponds to 224 to 243 (YAVILHSVLRLNSAEAMSKA). A helical membrane pass occupies residues 244–263 (LSTCSSHLILILFHTGIIVL). Residues 264 to 277 (SVTHLAEKKIPLIP) lie on the Extracellular side of the membrane. A helical transmembrane segment spans residues 278–298 (VFLNVLHNVIPPALNPLACAL). At 299 to 319 (RMHKLRLGFQRLLGLGQDVSK) the chain is on the cytoplasmic side.

The protein belongs to the G-protein coupled receptor 1 family.

The protein localises to the cell membrane. Its function is as follows. Odorant receptor. The protein is Olfactory receptor 56B4 (OR56B4) of Homo sapiens (Human).